Here is a 238-residue protein sequence, read N- to C-terminus: Large ribosomal subunit protein uL1 (238 aa).

It belongs to the universal ribosomal protein uL1 family. Part of the 50S ribosomal subunit.

Functionally, binds directly to 23S rRNA. The L1 stalk is quite mobile in the ribosome, and is involved in E site tRNA release. Its function is as follows. Protein L1 is also a translational repressor protein, it controls the translation of the L11 operon by binding to its mRNA. In Rippkaea orientalis (strain PCC 8801 / RF-1) (Cyanothece sp. (strain PCC 8801)), this protein is Large ribosomal subunit protein uL1.